Consider the following 148-residue polypeptide: 3-hydroxyacyl-[acyl-carrier-protein] dehydratase FabZ (148 aa).

The active site involves H48.

It belongs to the thioester dehydratase family. FabZ subfamily.

It is found in the cytoplasm. It catalyses the reaction a (3R)-hydroxyacyl-[ACP] = a (2E)-enoyl-[ACP] + H2O. Its function is as follows. Involved in unsaturated fatty acids biosynthesis. Catalyzes the dehydration of short chain beta-hydroxyacyl-ACPs and long chain saturated and unsaturated beta-hydroxyacyl-ACPs. The polypeptide is 3-hydroxyacyl-[acyl-carrier-protein] dehydratase FabZ (Campylobacter concisus (strain 13826)).